We begin with the raw amino-acid sequence, 739 residues long: Nuclear pore complex protein NUP62 (739 aa).

Repeat copies occupy residues 6–7, 17–18, 50–51, 52–53, 68–69, 70–71, 78–79, 80–81, 91–92, 93–94, 108–109, 110–111, 124–125, 141–142, 159–160, 174–175, 186–187, 207–208, and 221–222. Positions 6–450 are 26 X 2 AA repeats of F-G; sequence FGQSNSVGGF…AATFSTTGFG (445 aa). The disordered stretch occupies residues 18-67; that stretch reads GSSSATNSSSASSTTSPLSFSFNQSSNPSSTGFGFGSSVSSTPASSTTPS. Residues 79-218 show a composition bias toward low complexity; sequence GFGSSASSST…ASSSAATSTS (140 aa). The segment at 79 to 245 is disordered; the sequence is GFGSSASSST…VASSAPGSSS (167 aa). Low complexity predominate over residues 232 to 245; it reads PSFSVASSAPGSSS. 5 repeat units span residues 248 to 249, 271 to 272, 280 to 281, 308 to 309, and 366 to 367. 3 disordered regions span residues 281 to 329, 341 to 366, and 399 to 418; these read GSSS…ASPF, TASS…SFSF, and TTTS…SAPA. Repeat copies occupy residues 426–427 and 449–450. The segment at 471–533 is disordered; sequence KTSTPASSSQ…AVAPVAGSPK (63 aa). The span at 472–519 shows a compositional bias: low complexity; it reads TSTPASSSQPQTTSPAFSFSLPSSTSTTAPATSSATTTQTTLVVPSSS. Positions 584–674 form a coiled coil; that stretch reads RLEIEVAKVV…IRSIIQSVNA (91 aa).

The protein belongs to the nucleoporin NSP1/NUP62 family. Part of the nuclear pore complex (NPC). The NPC has an eight-fold symmetrical structure comprising a central transport channel and two rings, the cytoplasmic and nuclear rings, to which eight filaments are attached. The cytoplasmic filaments have loose ends, while the nuclear filaments are joined in a distal ring, forming a nuclear basket. NPCs are highly dynamic in configuration and composition, and can be devided in 3 subcomplexes, the NUP62 subcomplex, the NUP107-160 subcomplex and the NUP93 subcomplex, containing approximately 30 different nucleoporin proteins. Interacts with NUP58 and the importin KPNB1.

It is found in the nucleus envelope. The protein localises to the nucleus. It localises to the nuclear pore complex. The sequence is that of Nuclear pore complex protein NUP62 from Arabidopsis thaliana (Mouse-ear cress).